The sequence spans 578 residues: Proline--tRNA ligase (578 aa).

This sequence belongs to the class-II aminoacyl-tRNA synthetase family. ProS type 1 subfamily. Homodimer.

Its subcellular location is the cytoplasm. The enzyme catalyses tRNA(Pro) + L-proline + ATP = L-prolyl-tRNA(Pro) + AMP + diphosphate. Catalyzes the attachment of proline to tRNA(Pro) in a two-step reaction: proline is first activated by ATP to form Pro-AMP and then transferred to the acceptor end of tRNA(Pro). As ProRS can inadvertently accommodate and process non-cognate amino acids such as alanine and cysteine, to avoid such errors it has two additional distinct editing activities against alanine. One activity is designated as 'pretransfer' editing and involves the tRNA(Pro)-independent hydrolysis of activated Ala-AMP. The other activity is designated 'posttransfer' editing and involves deacylation of mischarged Ala-tRNA(Pro). The misacylated Cys-tRNA(Pro) is not edited by ProRS. In Burkholderia multivorans (strain ATCC 17616 / 249), this protein is Proline--tRNA ligase.